Consider the following 1402-residue polypeptide: Transcription factor SPT20 homolog (1402 aa).

Disordered regions lie at residues 1–29, 60–107, 114–133, 177–206, 786–817, 1136–1174, and 1199–1250; these read MNGN…EQEQ, VNSL…LDTD, NNDS…SSSS, QTTL…NNIL, APST…PTPV, PQQI…QYQT, and QPLQ…PPQI. The span at 7–29 shows a compositional bias: basic and acidic residues; that stretch reads VHTEENKNEHQQEGKGGEQEQEQ. Polar residues predominate over residues 60 to 72; the sequence is VNSLSEPTPNEQQ. Residues 73 to 102 show a composition bias toward low complexity; it reads NNNNNNNSNGNGNGNDETTSSKTTTIINSN. Low complexity-rich tracts occupy residues 183–204, 786–812, 1136–1150, 1157–1174, 1199–1218, and 1226–1250; these read NNNN…NNNN, APST…TTPT, PQQI…PPNQ, SPQS…QYQT, QPLQ…QQQQ, and PQQF…PPQI.

This sequence belongs to the SPT20 family.

The protein is Transcription factor SPT20 homolog of Dictyostelium discoideum (Social amoeba).